The sequence spans 156 residues: Acyl carrier protein, mitochondrial (156 aa).

The N-terminal 68 residues, 1-68 (MASRVLCACV…GTVTHLCRQY (68 aa)), are a transit peptide targeting the mitochondrion. In terms of domain architecture, Carrier spans 77–152 (DGIKDRVLYV…EIVDYIADKK (76 aa)). Position 88 is an N6-acetyllysine (lysine 88). Serine 112 carries the post-translational modification O-(pantetheine 4'-phosphoryl)serine.

It belongs to the acyl carrier protein (ACP) family. Mammalian complex I is composed of 45 different subunits. Interacts with ETFRF1. Identified in a complex composed of MALSU1, MIEF1 upstream open reading frame protein and NDUFAB1; within the trimeric complex, MIEF1 upstream open reading frame protein functions as a bridging scaffold that interacts with MALSU1 on one side, and with NDUFAB1 on the other side. The complex interacts with the mitochondrial large ribosomal subunit. Interacts with alpha-1-microglobulin chain; this interaction is required for the maintenance of mitochondrial redox homeostasis. Component of the mitochondrial core iron-sulfur cluster (ISC) complex composed of NFS1, LYRM4, NDUFAB1, ISCU, FXN, and FDX2; this complex is a heterohexamer containing two copies of each monomer. Component of the cyteine desulfurase complex composed of NFS1, LYRM4 and NDUFAB1; this complex contributes to the stability and cysteine desulfurase activity of NFS1. Post-translationally, phosphopantetheinylation at Ser-112 is essential for interactions with LYR motif-containing proteins.

The protein resides in the mitochondrion. In terms of biological role, carrier of the growing fatty acid chain in fatty acid biosynthesis. Accessory and non-catalytic subunit of the mitochondrial membrane respiratory chain NADH dehydrogenase (Complex I), which functions in the transfer of electrons from NADH to the respiratory chain. Accessory protein, of the core iron-sulfur cluster (ISC) assembly complex, that regulates, in association with LYRM4, the stability and the cysteine desulfurase activity of NFS1 and participates in the [2Fe-2S] clusters assembly on the scaffolding protein ISCU. The core iron-sulfur cluster (ISC) assembly complex is involved in the de novo synthesis of a [2Fe-2S] cluster, the first step of the mitochondrial iron-sulfur protein biogenesis. This process is initiated by the cysteine desulfurase complex (NFS1:LYRM4:NDUFAB1) that produces persulfide which is delivered on the scaffold protein ISCU in a FXN-dependent manner. Then this complex is stabilized by FDX2 which provides reducing equivalents to accomplish the [2Fe-2S] cluster assembly. Finally, the [2Fe-2S] cluster is transferred from ISCU to chaperone proteins, including HSCB, HSPA9 and GLRX5. This Mus musculus (Mouse) protein is Acyl carrier protein, mitochondrial.